The chain runs to 134 residues: Holo-[acyl-carrier-protein] synthase (134 aa).

Mg(2+)-binding residues include Asp-8 and Glu-58.

Belongs to the P-Pant transferase superfamily. AcpS family. It depends on Mg(2+) as a cofactor.

Its subcellular location is the cytoplasm. It carries out the reaction apo-[ACP] + CoA = holo-[ACP] + adenosine 3',5'-bisphosphate + H(+). Transfers the 4'-phosphopantetheine moiety from coenzyme A to a Ser of acyl-carrier-protein. In Acidiphilium cryptum (strain JF-5), this protein is Holo-[acyl-carrier-protein] synthase.